The sequence spans 180 residues: GTP cyclohydrolase 1 (180 aa).

Residues cysteine 71, histidine 74, and cysteine 142 each contribute to the Zn(2+) site.

This sequence belongs to the GTP cyclohydrolase I family. In terms of assembly, toroid-shaped homodecamer, composed of two pentamers of five dimers.

The enzyme catalyses GTP + H2O = 7,8-dihydroneopterin 3'-triphosphate + formate + H(+). It participates in cofactor biosynthesis; 7,8-dihydroneopterin triphosphate biosynthesis; 7,8-dihydroneopterin triphosphate from GTP: step 1/1. This Helicobacter acinonychis (strain Sheeba) protein is GTP cyclohydrolase 1.